The chain runs to 309 residues: DnaJ protein ERDJ7 (309 aa).

Positions 1-36 (MSQVGSAGEGSNSMAAAPPPRLLLLVVLLLVPVSNA) are cleaved as a signal peptide. At 37–130 (IYCEEDDCYD…YRAYYGHKTD (94 aa)) the chain is on the lumenal side. In terms of domain architecture, J spans 43–107 (DCYDLLGVKQ…STRGQYDYAI (65 aa)). N-linked (GlcNAc...) asparagine glycosylation is present at Asn55. A helical transmembrane segment spans residues 131-151 (PRAVLIGLLLIISAFQYLNQF). The Cytoplasmic portion of the chain corresponds to 152–219 (GRYSKAIETV…GVEKPSLWRL (68 aa)). Residues 220 to 242 (YGVQFILLPYSIGKVLSWKFCWF) form a helical membrane-spanning segment. Topologically, residues 243–309 (WRYRIKKLPY…EMRKESKRRR (67 aa)) are lumenal.

It is found in the endoplasmic reticulum membrane. May play a role in protein folding in the endoplasmic reticulum. The polypeptide is DnaJ protein ERDJ7 (Oryza sativa subsp. japonica (Rice)).